We begin with the raw amino-acid sequence, 300 residues long: NADH-cytochrome b5 reductase 2 (300 aa).

A helical membrane pass occupies residues 12-29 (FVYPLVGATIGSIGLAYY). In terms of domain architecture, FAD-binding FR-type spans 49–153 (DQWIDLKLKK…KGPVVKWKWE (105 aa)). 156-191 (QFKSIALIGGGTGITPLYQLLREITSNPEDKTKVSL) is a binding site for FAD.

The protein belongs to the flavoprotein pyridine nucleotide cytochrome reductase family. Requires FAD as cofactor.

Its subcellular location is the mitochondrion outer membrane. The enzyme catalyses 2 Fe(III)-[cytochrome b5] + NADH = 2 Fe(II)-[cytochrome b5] + NAD(+) + H(+). Its function is as follows. May mediate the reduction of outer membrane cytochrome b5. The polypeptide is NADH-cytochrome b5 reductase 2 (MCR1) (Lodderomyces elongisporus (strain ATCC 11503 / CBS 2605 / JCM 1781 / NBRC 1676 / NRRL YB-4239) (Yeast)).